Consider the following 490-residue polypeptide: tRNA modification GTPase MnmE (490 aa).

Arginine 23, glutamate 80, and lysine 133 together coordinate (6S)-5-formyl-5,6,7,8-tetrahydrofolate. The region spanning glycine 229–glycine 412 is the TrmE-type G domain. Residue asparagine 239 participates in K(+) binding. GTP-binding positions include asparagine 239 to serine 244, threonine 258 to threonine 264, and aspartate 283 to glycine 286. Serine 243 is a binding site for Mg(2+). Positions 258, 260, and 263 each coordinate K(+). Threonine 264 serves as a coordination point for Mg(2+). Residues proline 366–proline 382 are compositionally biased toward low complexity. Residues proline 366 to proline 388 are disordered. Serine 393 to arginine 395 is a GTP binding site. Residue lysine 490 participates in (6S)-5-formyl-5,6,7,8-tetrahydrofolate binding.

This sequence belongs to the TRAFAC class TrmE-Era-EngA-EngB-Septin-like GTPase superfamily. TrmE GTPase family. In terms of assembly, homodimer. Heterotetramer of two MnmE and two MnmG subunits. K(+) is required as a cofactor.

The protein localises to the cytoplasm. Functionally, exhibits a very high intrinsic GTPase hydrolysis rate. Involved in the addition of a carboxymethylaminomethyl (cmnm) group at the wobble position (U34) of certain tRNAs, forming tRNA-cmnm(5)s(2)U34. In Verminephrobacter eiseniae (strain EF01-2), this protein is tRNA modification GTPase MnmE.